A 205-amino-acid polypeptide reads, in one-letter code: GTP cyclohydrolase 1 (205 aa).

3 residues coordinate Zn(2+): cysteine 93, histidine 96, and cysteine 166.

Belongs to the GTP cyclohydrolase I family. As to quaternary structure, homomer.

The catalysed reaction is GTP + H2O = 7,8-dihydroneopterin 3'-triphosphate + formate + H(+). It functions in the pathway cofactor biosynthesis; 7,8-dihydroneopterin triphosphate biosynthesis; 7,8-dihydroneopterin triphosphate from GTP: step 1/1. The sequence is that of GTP cyclohydrolase 1 from Mycobacterium leprae (strain Br4923).